A 239-amino-acid chain; its full sequence is Ribosomal RNA small subunit methyltransferase A (239 aa).

6 residues coordinate S-adenosyl-L-methionine: N23, I25, G50, E72, D97, and N116.

The protein belongs to the class I-like SAM-binding methyltransferase superfamily. rRNA adenine N(6)-methyltransferase family. RsmA subfamily.

It localises to the cytoplasm. It catalyses the reaction adenosine(1518)/adenosine(1519) in 16S rRNA + 4 S-adenosyl-L-methionine = N(6)-dimethyladenosine(1518)/N(6)-dimethyladenosine(1519) in 16S rRNA + 4 S-adenosyl-L-homocysteine + 4 H(+). Specifically dimethylates two adjacent adenosines (A1518 and A1519) in the loop of a conserved hairpin near the 3'-end of 16S rRNA in the 30S particle. May play a critical role in biogenesis of 30S subunits. In Rickettsia felis (strain ATCC VR-1525 / URRWXCal2) (Rickettsia azadi), this protein is Ribosomal RNA small subunit methyltransferase A.